A 348-amino-acid chain; its full sequence is Phosphate acyltransferase (348 aa).

It belongs to the PlsX family. In terms of assembly, homodimer. Probably interacts with PlsY.

Its subcellular location is the cytoplasm. It carries out the reaction a fatty acyl-[ACP] + phosphate = an acyl phosphate + holo-[ACP]. Its pathway is lipid metabolism; phospholipid metabolism. Functionally, catalyzes the reversible formation of acyl-phosphate (acyl-PO(4)) from acyl-[acyl-carrier-protein] (acyl-ACP). This enzyme utilizes acyl-ACP as fatty acyl donor, but not acyl-CoA. This is Phosphate acyltransferase from Nitrosomonas europaea (strain ATCC 19718 / CIP 103999 / KCTC 2705 / NBRC 14298).